The following is a 295-amino-acid chain: DegV domain-containing protein MG326 (295 aa).

The DegV domain occupies 4 to 292; that stretch reads TAIITDSTAS…IDAFSISLLI (289 aa). Hexadecanoate contacts are provided by Thr-63 and Ser-95.

May bind long-chain fatty acids, such as palmitate, and may play a role in lipid transport or fatty acid metabolism. This Mycoplasma genitalium (strain ATCC 33530 / DSM 19775 / NCTC 10195 / G37) (Mycoplasmoides genitalium) protein is DegV domain-containing protein MG326.